A 419-amino-acid polypeptide reads, in one-letter code: L-rhamnose isomerase (419 aa).

Mn(2+)-binding residues include His262, Asp294, and Asp296.

This sequence belongs to the rhamnose isomerase family. As to quaternary structure, homotetramer. Mn(2+) serves as cofactor.

The protein localises to the cytoplasm. It catalyses the reaction L-rhamnopyranose = L-rhamnulose. The protein operates within carbohydrate degradation; L-rhamnose degradation; glycerone phosphate from L-rhamnose: step 1/3. Functionally, catalyzes the interconversion of L-rhamnose and L-rhamnulose. The polypeptide is L-rhamnose isomerase (Escherichia coli O157:H7).